We begin with the raw amino-acid sequence, 238 residues long: 2-C-methyl-D-erythritol 4-phosphate cytidylyltransferase (238 aa).

It belongs to the IspD/TarI cytidylyltransferase family. IspD subfamily.

The enzyme catalyses 2-C-methyl-D-erythritol 4-phosphate + CTP + H(+) = 4-CDP-2-C-methyl-D-erythritol + diphosphate. It functions in the pathway isoprenoid biosynthesis; isopentenyl diphosphate biosynthesis via DXP pathway; isopentenyl diphosphate from 1-deoxy-D-xylulose 5-phosphate: step 2/6. Its function is as follows. Catalyzes the formation of 4-diphosphocytidyl-2-C-methyl-D-erythritol from CTP and 2-C-methyl-D-erythritol 4-phosphate (MEP). The sequence is that of 2-C-methyl-D-erythritol 4-phosphate cytidylyltransferase from Aliivibrio fischeri (strain ATCC 700601 / ES114) (Vibrio fischeri).